Reading from the N-terminus, the 144-residue chain is Large ribosomal subunit protein uL15 (144 aa).

Residues 1–57 (MLLNTLSPAAGSKHAPKRLGRGVGSGLGKTGGRGHKGQKSRSGGKVRPGFEGGQMPL) are disordered. A compositionally biased stretch (gly residues) spans 21 to 31 (RGVGSGLGKTG). Positions 32-44 (GRGHKGQKSRSGG) are enriched in basic residues.

Belongs to the universal ribosomal protein uL15 family. In terms of assembly, part of the 50S ribosomal subunit.

In terms of biological role, binds to the 23S rRNA. The chain is Large ribosomal subunit protein uL15 from Vibrio cholerae serotype O1 (strain ATCC 39315 / El Tor Inaba N16961).